We begin with the raw amino-acid sequence, 91 residues long: UPF0358 protein SAB0977 (91 aa).

This sequence belongs to the UPF0358 family.

The chain is UPF0358 protein SAB0977 from Staphylococcus aureus (strain bovine RF122 / ET3-1).